The sequence spans 79 residues: Sulfur carrier protein TusA (79 aa).

The active-site Cysteine persulfide intermediate is cysteine 17.

Belongs to the sulfur carrier protein TusA family.

The protein localises to the cytoplasm. Its function is as follows. Sulfur carrier protein which probably makes part of a sulfur-relay system. This is Sulfur carrier protein TusA from Haemophilus influenzae (strain 86-028NP).